Here is a 208-residue protein sequence, read N- to C-terminus: Uracil phosphoribosyltransferase (208 aa).

5-phospho-alpha-D-ribose 1-diphosphate contacts are provided by residues arginine 78, arginine 103, and aspartate 130–serine 138. Residues isoleucine 193 and glycine 198–alanine 200 contribute to the uracil site. Aspartate 199 provides a ligand contact to 5-phospho-alpha-D-ribose 1-diphosphate.

Belongs to the UPRTase family. Requires Mg(2+) as cofactor.

The catalysed reaction is UMP + diphosphate = 5-phospho-alpha-D-ribose 1-diphosphate + uracil. It participates in pyrimidine metabolism; UMP biosynthesis via salvage pathway; UMP from uracil: step 1/1. With respect to regulation, allosterically activated by GTP. Functionally, catalyzes the conversion of uracil and 5-phospho-alpha-D-ribose 1-diphosphate (PRPP) to UMP and diphosphate. In Sodalis glossinidius (strain morsitans), this protein is Uracil phosphoribosyltransferase.